We begin with the raw amino-acid sequence, 85 residues long: Small ribosomal subunit protein bS16 (85 aa).

The protein belongs to the bacterial ribosomal protein bS16 family.

This chain is Small ribosomal subunit protein bS16, found in Neorickettsia sennetsu (strain ATCC VR-367 / Miyayama) (Ehrlichia sennetsu).